We begin with the raw amino-acid sequence, 65 residues long: Large ribosomal subunit protein uL30 (65 aa).

This sequence belongs to the universal ribosomal protein uL30 family. As to quaternary structure, part of the 50S ribosomal subunit.

This is Large ribosomal subunit protein uL30 from Methylobacillus flagellatus (strain ATCC 51484 / DSM 6875 / VKM B-1610 / KT).